A 184-amino-acid chain; its full sequence is NADH-quinone oxidoreductase subunit B (184 aa).

[4Fe-4S] cluster is bound by residues Cys-37, Cys-38, Cys-103, and Cys-132.

It belongs to the complex I 20 kDa subunit family. As to quaternary structure, NDH-1 is composed of 14 different subunits. Subunits NuoB, C, D, E, F, and G constitute the peripheral sector of the complex. It depends on [4Fe-4S] cluster as a cofactor.

It localises to the cell membrane. It carries out the reaction a quinone + NADH + 5 H(+)(in) = a quinol + NAD(+) + 4 H(+)(out). Its function is as follows. NDH-1 shuttles electrons from NADH, via FMN and iron-sulfur (Fe-S) centers, to quinones in the respiratory chain. The immediate electron acceptor for the enzyme in this species is believed to be a menaquinone. Couples the redox reaction to proton translocation (for every two electrons transferred, four hydrogen ions are translocated across the cytoplasmic membrane), and thus conserves the redox energy in a proton gradient. This Rhodococcus erythropolis (strain PR4 / NBRC 100887) protein is NADH-quinone oxidoreductase subunit B.